We begin with the raw amino-acid sequence, 357 residues long: Alanine racemase (357 aa).

The Proton acceptor; specific for D-alanine role is filled by Lys-35. Position 35 is an N6-(pyridoxal phosphate)lysine (Lys-35). A substrate-binding site is contributed by Arg-130. Residue Tyr-255 is the Proton acceptor; specific for L-alanine of the active site. Residue Met-303 coordinates substrate.

This sequence belongs to the alanine racemase family. The cofactor is pyridoxal 5'-phosphate.

It catalyses the reaction L-alanine = D-alanine. It functions in the pathway amino-acid biosynthesis; D-alanine biosynthesis; D-alanine from L-alanine: step 1/1. Functionally, catalyzes the interconversion of L-alanine and D-alanine. May also act on other amino acids. The polypeptide is Alanine racemase (alr) (Nitrosospira multiformis (strain ATCC 25196 / NCIMB 11849 / C 71)).